The following is a 171-amino-acid chain: ATP synthase subunit b 2 (171 aa).

The chain crosses the membrane as a helical span at residues 9-29; that stretch reads APWHHPVFWVAVAFVLFFVLF.

It belongs to the ATPase B chain family. In terms of assembly, F-type ATPases have 2 components, F(1) - the catalytic core - and F(0) - the membrane proton channel. F(1) has five subunits: alpha(3), beta(3), gamma(1), delta(1), epsilon(1). F(0) has three main subunits: a(1), b(2) and c(10-14). The alpha and beta chains form an alternating ring which encloses part of the gamma chain. F(1) is attached to F(0) by a central stalk formed by the gamma and epsilon chains, while a peripheral stalk is formed by the delta and b chains.

The protein resides in the cell inner membrane. Its function is as follows. F(1)F(0) ATP synthase produces ATP from ADP in the presence of a proton or sodium gradient. F-type ATPases consist of two structural domains, F(1) containing the extramembraneous catalytic core and F(0) containing the membrane proton channel, linked together by a central stalk and a peripheral stalk. During catalysis, ATP synthesis in the catalytic domain of F(1) is coupled via a rotary mechanism of the central stalk subunits to proton translocation. In terms of biological role, component of the F(0) channel, it forms part of the peripheral stalk, linking F(1) to F(0). The protein is ATP synthase subunit b 2 of Granulibacter bethesdensis (strain ATCC BAA-1260 / CGDNIH1).